Here is an 884-residue protein sequence, read N- to C-terminus: Protein translocase subunit SecA (884 aa).

Residues Gln88, 106–110 (GEGKT), and Asp509 each bind ATP. The interval 822 to 884 (EQKKLKMSGA…PKKGLFANND (63 aa)) is disordered. A compositionally biased stretch (basic and acidic residues) spans 833 to 842 (KGGEDLEETK). Cys858, Cys860, Cys869, and His870 together coordinate Zn(2+).

It belongs to the SecA family. Monomer and homodimer. Part of the essential Sec protein translocation apparatus which comprises SecA, SecYEG and auxiliary proteins SecDF-YajC and YidC. Zn(2+) is required as a cofactor.

Its subcellular location is the cell inner membrane. The protein localises to the cytoplasm. It catalyses the reaction ATP + H2O + cellular proteinSide 1 = ADP + phosphate + cellular proteinSide 2.. Its function is as follows. Part of the Sec protein translocase complex. Interacts with the SecYEG preprotein conducting channel. Has a central role in coupling the hydrolysis of ATP to the transfer of proteins into and across the cell membrane, serving as an ATP-driven molecular motor driving the stepwise translocation of polypeptide chains across the membrane. This is Protein translocase subunit SecA from Campylobacter hominis (strain ATCC BAA-381 / DSM 21671 / CCUG 45161 / LMG 19568 / NCTC 13146 / CH001A).